Reading from the N-terminus, the 520-residue chain is Catalase easC (520 aa).

Residue histidine 71 is part of the active site. Tyrosine 361 contributes to the heme binding site.

The protein belongs to the catalase family. Requires heme as cofactor.

Its pathway is alkaloid biosynthesis; ergot alkaloid biosynthesis. Catalase; part of the gene cluster that mediates the biosynthesis of fumiclavanine C, a fungal ergot alkaloid. DmaW catalyzes the first step of ergot alkaloid biosynthesis by condensing dimethylallyl diphosphate (DMAP) and tryptophan to form 4-dimethylallyl-L-tryptophan. The second step is catalyzed by the methyltransferase easF that methylates 4-dimethylallyl-L-tryptophan in the presence of S-adenosyl-L-methionine, resulting in the formation of 4-dimethylallyl-L-abrine. The catalase easC and the FAD-dependent oxidoreductase easE then transform 4-dimethylallyl-L-abrine to chanoclavine-I which is further oxidized by EasD in the presence of NAD(+), resulting in the formation of chanoclavine-I aldehyde. EasA reduces chanoclavine-I aldehyde to dihydrochanoclavine-I aldehyde that spontaneously dehydrates to form 6,8-dimethyl-6,7-didehydroergoline. EasG then catalyzes the reduction of 6,8-dimethyl-6,7-didehydroergoline to form festuclavine. Hydrolysis of festuclavine by easM then leads to the formation of fumigaclavine B which is in turn acetylated by easN to fumigaclavine A. Finally, easL catalyzes the conversion of fumigaclavine A into fumigaclavine C by attaching a dimethylallyl moiety to C-2 of the indole nucleus. This is Catalase easC from Aspergillus fumigatus (strain ATCC MYA-4609 / CBS 101355 / FGSC A1100 / Af293) (Neosartorya fumigata).